The chain runs to 148 residues: Ubiquitin-conjugating enzyme E2 4 (148 aa).

Residues 1 to 22 (MSSSKRIAKELSDLERDPPTSC) are disordered. A UBC core domain is found at 2 to 148 (SSSKRIAKEL…AREWTKKYAV (147 aa)). Basic and acidic residues predominate over residues 7–18 (IAKELSDLERDP). Serine 12 bears the Phosphoserine mark. The active-site Glycyl thioester intermediate is the cysteine 86. Residue lysine 91 forms a Glycyl lysine isopeptide (Lys-Gly) (interchain with G-Cter in ubiquitin) linkage.

This sequence belongs to the ubiquitin-conjugating enzyme family. Interacts with TUL1. The N-terminus is blocked.

The catalysed reaction is S-ubiquitinyl-[E1 ubiquitin-activating enzyme]-L-cysteine + [E2 ubiquitin-conjugating enzyme]-L-cysteine = [E1 ubiquitin-activating enzyme]-L-cysteine + S-ubiquitinyl-[E2 ubiquitin-conjugating enzyme]-L-cysteine.. Its pathway is protein modification; protein ubiquitination. E2 ubiquitin-conjugating enzyme that catalyzes the covalent attachment of ubiquitin to other proteins. Mediates the selective degradation of short-lived and abnormal proteins. Mediates ubiquitination of PEX5. This Saccharomyces cerevisiae (strain ATCC 204508 / S288c) (Baker's yeast) protein is Ubiquitin-conjugating enzyme E2 4.